Consider the following 214-residue polypeptide: Ribosomal RNA small subunit methyltransferase G (214 aa).

S-adenosyl-L-methionine is bound by residues glycine 58, 109 to 110, and arginine 126; that span reads AE.

It belongs to the methyltransferase superfamily. RNA methyltransferase RsmG family.

It localises to the cytoplasm. Its function is as follows. Specifically methylates the N7 position of a guanine in 16S rRNA. The polypeptide is Ribosomal RNA small subunit methyltransferase G (Ureaplasma parvum serovar 3 (strain ATCC 700970)).